The following is a 1710-amino-acid chain: Chromodomain-helicase-DNA-binding protein 1 (1710 aa).

Over residues 1–10 (MNGHSDEESV) the composition is skewed to basic and acidic residues. A disordered region spans residues 1 to 252 (MNGHSDEESV…KEDEEMKTDS (252 aa)). The segment covering 35–63 (SSGSSSDGSSSQSGSSDSDSGSESGSQSE) has biased composition (low complexity). The span at 67–85 (DTSRENKVQAKPPKVDGAE) shows a compositional bias: basic and acidic residues. Over residues 105-121 (QQQQQQQQQHQASSNSG) the composition is skewed to low complexity. Residues 122 to 136 (SEEDSSSSEDSDDSS) are compositionally biased toward acidic residues. Positions 152–163 (SGSGSPSQSGSD) are enriched in low complexity. Over residues 187-210 (KVKSRKPQNRSKSKNGKKILGQKK) the composition is skewed to basic residues. Phosphoserine occurs at positions 215 and 216. A compositionally biased stretch (acidic residues) spans 215-226 (SSEEDDDEEDYD). A Phosphothreonine modification is found at T237. At S241 the chain carries Phosphoserine. A Phosphothreonine modification is found at T250. S252 is subject to Phosphoserine. 2 consecutive Chromo domains span residues 272-364 (ETIE…RWLK) and 389-452 (QIVE…TPFK). S471 is modified (phosphoserine). In terms of domain architecture, Helicase ATP-binding spans 493–663 (AHSWCKGNSC…WSLLHFIMPE (171 aa)). 506–513 (DEMGLGKT) provides a ligand contact to ATP. The DEAH box signature appears at 614–617 (DEAH). A Helicase C-terminal domain is found at 792 to 943 (LLDKLLIRLR…HLVIQRMDTT (152 aa)). 8 positions are modified to phosphoserine: S1025, S1040, S1081, S1085, S1096, S1098, S1100, and S1102. A disordered region spans residues 1080 to 1120 (ISFNGSEGRRSRSRRYSGSDSDSISEGKRPKKRGRPRTIPR). The span at 1108–1117 (RPKKRGRPRT) shows a compositional bias: basic residues. Phosphoserine is present on S1161. Disordered stretches follow at residues 1321–1408 (EALS…ESEE) and 1502–1710 (KKRQ…SRKT). The segment covering 1329 to 1345 (SKRRKARAKKNKAMKSI) has biased composition (basic residues). Residues S1353, S1355, S1356, S1360, S1363, S1371, and S1373 each carry the phosphoserine modification. A compositionally biased stretch (basic and acidic residues) spans 1370-1379 (LSESKSDGRE). Residues 1409-1511 (LDQKTFSICK…KKRQESQQNS (103 aa)) are CHD1 helical C-terminal domain (CHCT). Residues 1507-1516 (SQQNSDQNSN) show a composition bias toward low complexity. 2 stretches are compositionally biased toward basic and acidic residues: residues 1523-1573 (RNPD…DSRK) and 1582-1670 (GKDH…DHRA). S1622 carries the post-translational modification Phosphoserine. 3 consecutive repeat copies span residues 1628 to 1632 (HSDHR), 1634 to 1638 (HSDHR), and 1640 to 1644 (HSDHR). Positions 1628 to 1644 (HSDHRSHSDHRLHSDHR) are 3 X 5 AA repeats of H-S-D-H-R. A phosphoserine mark is found at S1677, R1688, and S1689. Residues 1690–1701 (PFEHSVEHKSTP) show a composition bias toward basic and acidic residues.

It belongs to the SNF2/RAD54 helicase family. Component of the SAGA complex. Interacts with BCLAF1, NCoR, SRP20 and SAFB. Specifically interacts with methylated H3K4me2 and H3K4me3. Interacts with the FACT complex, the PAF complex and the U2 snRNP. Interacts directly with PAF1, SFA3A1, SFA3A2, SFA3A3, SNF2 and SSRP1. Expressed in many tissues including in the brain, where the highest level of expression is found in the cerebellum and basal ganglia.

The protein localises to the nucleus. It is found in the cytoplasm. It carries out the reaction ATP + H2O = ADP + phosphate + H(+). ATP-dependent chromatin-remodeling factor which functions as substrate recognition component of the transcription regulatory histone acetylation (HAT) complex SAGA. Regulates polymerase II transcription. Also required for efficient transcription by RNA polymerase I, and more specifically the polymerase I transcription termination step. Regulates negatively DNA replication. Not only involved in transcription-related chromatin-remodeling, but also required to maintain a specific chromatin configuration across the genome. Is also associated with histone deacetylase (HDAC) activity. Required for the bridging of SNF2, the FACT complex, the PAF complex as well as the U2 snRNP complex to H3K4me3. Functions to modulate the efficiency of pre-mRNA splicing in part through physical bridging of spliceosomal components to H3K4me3. Required for maintaining open chromatin and pluripotency in embryonic stem cells. In Homo sapiens (Human), this protein is Chromodomain-helicase-DNA-binding protein 1.